Consider the following 194-residue polypeptide: uncharacterized protein (194 aa).

Disordered regions lie at residues 1–72 (MAAK…PAAE) and 113–194 (VLIP…SLAV). The span at 26–39 (AEGRSSEGRKERTA) shows a compositional bias: basic and acidic residues. The segment covering 146–171 (GSSSTSRNQVASLAYRTQNTAASQPR) has biased composition (polar residues).

This is an uncharacterized protein from Homo sapiens (Human).